We begin with the raw amino-acid sequence, 236 residues long: Purine nucleoside phosphorylase DeoD-type 2 (236 aa).

Position 5 (H5) interacts with a purine D-ribonucleoside. Residues G21, R25, R44, and 88–91 (RVGS) contribute to the phosphate site. A purine D-ribonucleoside contacts are provided by residues 180-182 (DME) and 204-205 (SD). The active-site Proton donor is D205.

This sequence belongs to the PNP/UDP phosphorylase family. As to quaternary structure, homohexamer; trimer of homodimers.

The enzyme catalyses a purine D-ribonucleoside + phosphate = a purine nucleobase + alpha-D-ribose 1-phosphate. It catalyses the reaction a purine 2'-deoxy-D-ribonucleoside + phosphate = a purine nucleobase + 2-deoxy-alpha-D-ribose 1-phosphate. Catalyzes the reversible phosphorolytic breakdown of the N-glycosidic bond in the beta-(deoxy)ribonucleoside molecules, with the formation of the corresponding free purine bases and pentose-1-phosphate. This chain is Purine nucleoside phosphorylase DeoD-type 2, found in Aliivibrio fischeri (strain ATCC 700601 / ES114) (Vibrio fischeri).